The primary structure comprises 299 residues: UDP-N-acetylenolpyruvoylglucosamine reductase (299 aa).

Residues 29–193 (RIGGPAEIFL…TAASLRFRKA (165 aa)) form the FAD-binding PCMH-type domain. R173 is an active-site residue. The active-site Proton donor is the S222. E292 is a catalytic residue.

Belongs to the MurB family. Requires FAD as cofactor.

The protein resides in the cytoplasm. The enzyme catalyses UDP-N-acetyl-alpha-D-muramate + NADP(+) = UDP-N-acetyl-3-O-(1-carboxyvinyl)-alpha-D-glucosamine + NADPH + H(+). Its pathway is cell wall biogenesis; peptidoglycan biosynthesis. Functionally, cell wall formation. The sequence is that of UDP-N-acetylenolpyruvoylglucosamine reductase from Syntrophotalea carbinolica (strain DSM 2380 / NBRC 103641 / GraBd1) (Pelobacter carbinolicus).